Here is a 1024-residue protein sequence, read N- to C-terminus: MRFFSLFIHRPVATWLLTLTIVLAGFLGFRLLPVAPLPQVDFPVIVVTASLPGASPEIMASSVATPLERALGRIAGVSEMTSSSSLGSTHVILLFDFDRDINGAARDVQGAINAAQSLLPSGMPNRPSYRKVNPSDAPIMIMTLTSDTYSPGQLYDYASTKLAQRLAQIDGVGDVTVGGSSLPAVRVDLNPQALFNQGVSLDAVRSTIANANVRKPQGAIEDSQLRWWIKTNDELHTAAEYRPLVIHYRNGAAVRLQDVATVTDSVQDVRNAGMSNARPAVLLVIRKSPQANIIDTVDRIRGEVPELRNTLPASIGLDIAQDSSRTIRASLHEVEQSLAISVGLVVLVVFAFLRSGRATLIPAVAVPVSLIGTFAAMYLCGFSLNNLSLMALTVATGFVVDDAIVVLENISRHVEAGMKPLLAALKGVREVGFTVISMSISLVAVFLPLLLMDGIIGRFFKEFAITLSVSIAISLVISLTLTPMMCARLLRPNAPRQQPRLRGFGRILMAIQRGYGRGLHWVLDHARWGLLVFVATLGLTVYLYISIPKTFMPEQDTGRLMGFIQADQSISFQAMRGKLETFMRIVRDDPAVESVVGFTGGSDTNSGSMFIALKPLSARSDNAQQVISRLREKLTKEPGANLWLMAVQDIRIGARQSNAGYQYSLLSDSLDDLRQWEPKIRRAFSALPELVDVNSDQQDKGAEMALTYDRTSMARLGIDVADVNDLLNNAFGQRQISTIYQPLNQYKVVMGVDPRYSQDISALNQMYLINKEGRSIPLSAFAKWQPANAPLSVEHEGLSAASTISFNLPEGVSLSQASAAIERSVTSLGVPASVRGSFSGTAAVFEQTQSSQLWLILAAIATVYIVLGILYESYVHPLTILSTLPSAGVGALLALELFNAPFSLIALIGILLLIGIVKKNAIMMVDFALQAQRQEGMTAREAIFQASLLRFRPIIMTTLAALLGALPLALGSGDGAELRQPLGITIVGGLVMSQLLTLFTTPVVYLYMDKLRRRPRWLPVEEKS.

11 helical membrane-spanning segments follow: residues 15 to 35 (WLLT…LPVA), 333 to 353 (EVEQ…FAFL), 360 to 380 (LIPA…MYLC), 387 to 407 (LSLM…IVVL), 431 to 451 (VGFT…PLLL), 463 to 483 (FAIT…TLTP), 528 to 548 (WGLL…ISIP), 853 to 873 (LWLI…LYES), 897 to 917 (LFNA…IGIV), 953 to 973 (PIIM…LGSG), and 984 to 1004 (ITIV…TPVV).

This sequence belongs to the resistance-nodulation-cell division (RND) (TC 2.A.6) family. MdtC subfamily. In terms of assembly, part of a tripartite efflux system composed of MdtA, MdtB and MdtC. MdtC forms a heteromultimer with MdtB.

The protein resides in the cell inner membrane. The sequence is that of Multidrug resistance protein MdtC from Erwinia tasmaniensis (strain DSM 17950 / CFBP 7177 / CIP 109463 / NCPPB 4357 / Et1/99).